The sequence spans 1007 residues: Beta-galactosidase (1007 aa).

Positions 29 to 48 (TIPPHSDHESFQSQEELEEG) are disordered. Glutamate 465 functions as the Proton donor in the catalytic mechanism. The active-site Nucleophile is glutamate 532.

Belongs to the glycosyl hydrolase 2 family. Monomer.

It catalyses the reaction Hydrolysis of terminal non-reducing beta-D-galactose residues in beta-D-galactosides.. The chain is Beta-galactosidase (lacZ) from Lactobacillus delbrueckii subsp. bulgaricus.